Reading from the N-terminus, the 701-residue chain is Elongation factor G (701 aa).

In terms of domain architecture, tr-type G spans 8–290; sequence SLYRNIGISA…AVVELLPAPT (283 aa). GTP is bound by residues 17–24, 88–92, and 142–145; these read AHIDAGKT, DTPGH, and NKMD.

This sequence belongs to the TRAFAC class translation factor GTPase superfamily. Classic translation factor GTPase family. EF-G/EF-2 subfamily.

It is found in the cytoplasm. Catalyzes the GTP-dependent ribosomal translocation step during translation elongation. During this step, the ribosome changes from the pre-translocational (PRE) to the post-translocational (POST) state as the newly formed A-site-bound peptidyl-tRNA and P-site-bound deacylated tRNA move to the P and E sites, respectively. Catalyzes the coordinated movement of the two tRNA molecules, the mRNA and conformational changes in the ribosome. In Neisseria meningitidis serogroup C (strain 053442), this protein is Elongation factor G.